The sequence spans 383 residues: tRNA (adenine(58)-N(1))-methyltransferase catalytic subunit TRM61 (383 aa).

S-adenosyl-L-methionine-binding positions include V94, 121–124 (SGSF), E139, R144, 168–169 (DV), and D203. Position 302 is a phosphoserine (S302).

Belongs to the class I-like SAM-binding methyltransferase superfamily. TRM61 family. As to quaternary structure, heterotetramer; composed of two copies of TRM6/GCD10 and two copies of TRM61/GCD14.

Its subcellular location is the nucleus. The enzyme catalyses adenosine(58) in tRNA + S-adenosyl-L-methionine = N(1)-methyladenosine(58) in tRNA + S-adenosyl-L-homocysteine + H(+). Its function is as follows. Catalytic subunit of tRNA (adenine-N(1)-)-methyltransferase, which catalyzes the formation of N(1)-methyladenine at position 58 (m1A58) in initiator methionyl-tRNA. GCD14 is also required for repression of GCN4 mRNA translation by the upstream open reading frames (uORFs) under conditions of amino acid sufficiency. The polypeptide is tRNA (adenine(58)-N(1))-methyltransferase catalytic subunit TRM61 (GCD14) (Saccharomyces cerevisiae (strain ATCC 204508 / S288c) (Baker's yeast)).